The primary structure comprises 364 residues: NAC transcription factor 56 (364 aa).

Residues 1-23 (MESTDSSGGPPPPQPNLPPGFRF) are disordered. A compositionally biased stretch (pro residues) spans 9 to 18 (GPPPPQPNLP). In terms of domain architecture, NAC spans 17–178 (LPPGFRFHPT…DWVLCRIYKK (162 aa)). Residues 116 to 184 (VGVKKALVFY…IYKKNNASRH (69 aa)) mediate DNA binding.

Stamen specific, in anthers from stage 8. Expressed in the outer integument, but seems not expressed in the embryo at the torpedo stage.

The protein localises to the nucleus. Its function is as follows. Transcription factor of the NAC family. Together with NAC018/NARS2, regulates embryogenesis by regulating the development and degeneration of ovule integuments, a process required for intertissue communication between the embryo and the maternal integument. The protein is NAC transcription factor 56 of Arabidopsis thaliana (Mouse-ear cress).